We begin with the raw amino-acid sequence, 638 residues long: Methylmalonyl-CoA mutase small subunit (638 aa).

Polar residues predominate over residues 1–11 (MSSTDQGTNPA). The interval 1–34 (MSSTDQGTNPADTDDLTPTTLSLAGDFPKATEEQ) is disordered.

This sequence belongs to the methylmalonyl-CoA mutase family. As to quaternary structure, heterodimer of an alpha and a beta chain. It depends on adenosylcob(III)alamin as a cofactor.

It catalyses the reaction (R)-methylmalonyl-CoA = succinyl-CoA. The protein operates within metabolic intermediate metabolism; propanoyl-CoA degradation; succinyl-CoA from propanoyl-CoA: step 3/3. Catalyzes the isomerization of succinyl-CoA to methylmalonyl-CoA during synthesis of propionate from tricarboxylic acid-cycle intermediates. This chain is Methylmalonyl-CoA mutase small subunit (mutA), found in Propionibacterium freudenreichii subsp. shermanii.